The primary structure comprises 206 residues: Large ribosomal subunit protein uL4 (206 aa).

A disordered region spans residues 42-94 (RRQQGSHKAQGRGDVSRTGSKMYKQKGTGRARHHSARAPQFRGGGQAHGPVVR). Residues 64-77 (YKQKGTGRARHHSA) show a composition bias toward basic residues.

The protein belongs to the universal ribosomal protein uL4 family. In terms of assembly, part of the 50S ribosomal subunit.

Functionally, one of the primary rRNA binding proteins, this protein initially binds near the 5'-end of the 23S rRNA. It is important during the early stages of 50S assembly. It makes multiple contacts with different domains of the 23S rRNA in the assembled 50S subunit and ribosome. Its function is as follows. Forms part of the polypeptide exit tunnel. The protein is Large ribosomal subunit protein uL4 of Brucella abortus biovar 1 (strain 9-941).